The chain runs to 169 residues: Large ribosomal subunit protein uL10 (169 aa).

This sequence belongs to the universal ribosomal protein uL10 family. As to quaternary structure, part of the ribosomal stalk of the 50S ribosomal subunit. The N-terminus interacts with L11 and the large rRNA to form the base of the stalk. The C-terminus forms an elongated spine to which L12 dimers bind in a sequential fashion forming a multimeric L10(L12)X complex.

Forms part of the ribosomal stalk, playing a central role in the interaction of the ribosome with GTP-bound translation factors. The chain is Large ribosomal subunit protein uL10 from Deinococcus geothermalis (strain DSM 11300 / CIP 105573 / AG-3a).